We begin with the raw amino-acid sequence, 293 residues long: Tumor necrosis factor receptor superfamily member 13B (293 aa).

Residues 1-165 (MSGLGRSRRG…SADQVALVYS (165 aa)) are Extracellular-facing. 2 TNFR-Cys repeats span residues 33-67 (SCPE…AFCR) and 70-104 (SCRK…AYFC). Cystine bridges form between cysteine 34/cysteine 47, cysteine 50/cysteine 62, cysteine 54/cysteine 66, cysteine 71/cysteine 86, cysteine 89/cysteine 100, and cysteine 93/cysteine 104. Residues 115–146 (PPELRRQRSGEVENNSDNSGRYQGLEHRGSEA) form a disordered region. Residues 126–135 (VENNSDNSGR) are compositionally biased toward polar residues. A glycan (N-linked (GlcNAc...) asparagine) is linked at asparagine 128. The chain crosses the membrane as a helical; Signal-anchor for type III membrane protein span at residues 166–186 (TLGLCLCAVLCCFLVAVACFL). At 187–293 (KKRGDPCSCQ…VPAQEGGPGA (107 aa)) the chain is on the cytoplasmic side. Residues 192–226 (PCSCQPRSRPRQSPAKSSQDHAMEAGSPVSTSPEP) are disordered.

In terms of assembly, binds TRAF2, TRAF5 and TRAF6. Binds the NH2-terminal domain of CAMLG with its C-terminus. As to expression, highly expressed in spleen, thymus, small intestine and peripheral blood leukocytes. Expressed in resting B-cells and activated T-cells, but not in resting T-cells.

It localises to the membrane. Receptor for TNFSF13/APRIL and TNFSF13B/TALL1/BAFF/BLYS that binds both ligands with similar high affinity. Mediates calcineurin-dependent activation of NF-AT, as well as activation of NF-kappa-B and AP-1. Involved in the stimulation of B- and T-cell function and the regulation of humoral immunity. This Homo sapiens (Human) protein is Tumor necrosis factor receptor superfamily member 13B (TNFRSF13B).